A 194-amino-acid chain; its full sequence is Imidazoleglycerol-phosphate dehydratase (194 aa).

This sequence belongs to the imidazoleglycerol-phosphate dehydratase family.

The protein resides in the cytoplasm. It carries out the reaction D-erythro-1-(imidazol-4-yl)glycerol 3-phosphate = 3-(imidazol-4-yl)-2-oxopropyl phosphate + H2O. It functions in the pathway amino-acid biosynthesis; L-histidine biosynthesis; L-histidine from 5-phospho-alpha-D-ribose 1-diphosphate: step 6/9. This is Imidazoleglycerol-phosphate dehydratase from Lacticaseibacillus casei (strain BL23) (Lactobacillus casei).